A 299-amino-acid chain; its full sequence is Somaliensene A/B synthase (299 aa).

The next 7 membrane-spanning stretches (helical) occupy residues W32–T49, T56–Y72, I110–W132, L153–A171, A177–V194, V222–A241, and W247–L269.

The protein belongs to the UbiA prenyltransferase family. Mg(2+) is required as a cofactor.

It is found in the cell membrane. It carries out the reaction (2E,6E,10E,14E)-geranylfarnesyl diphosphate = somaliensene A + diphosphate. It catalyses the reaction (2E,6E,10E,14E)-geranylfarnesyl diphosphate = (-)-somaliensene B + diphosphate. It participates in secondary metabolite biosynthesis; terpenoid biosynthesis. Functionally, sesterterpene cyclase, which converts geranylfarnesyl diphosphate (GFPP) into the terpenes somaliensene A and somaliensene B. The chain is Somaliensene A/B synthase from Streptomyces somaliensis (strain ATCC 33201 / DSM 40738 / JCM 12659 / KCTC 9044 / NCTC 11332 / NRRL B-12077 / IP 733).